The sequence spans 85 residues: Teretoxin Tan9.6 (85 aa).

An N-terminal signal peptide occupies residues 1 to 21; sequence MMSKTGALLLTFMILVLFSMA. Residues 22–52 constitute a propeptide that is removed on maturation; that stretch reads AADALGERFEDHEQKIREQDAGVGLLSLMGR.

Contains 3 disulfide bonds. Expressed by the venom duct.

It is found in the secreted. The sequence is that of Teretoxin Tan9.6 from Terebra anilis (Auger snail).